We begin with the raw amino-acid sequence, 180 residues long: Large ribosomal subunit protein uL5 (180 aa).

The protein belongs to the universal ribosomal protein uL5 family. In terms of assembly, part of the 50S ribosomal subunit; part of the 5S rRNA/L5/L18/L25 subcomplex. Contacts the 5S rRNA and the P site tRNA. Forms a bridge to the 30S subunit in the 70S ribosome.

Functionally, this is one of the proteins that bind and probably mediate the attachment of the 5S RNA into the large ribosomal subunit, where it forms part of the central protuberance. In the 70S ribosome it contacts protein S13 of the 30S subunit (bridge B1b), connecting the 2 subunits; this bridge is implicated in subunit movement. Contacts the P site tRNA; the 5S rRNA and some of its associated proteins might help stabilize positioning of ribosome-bound tRNAs. In Limosilactobacillus reuteri (strain DSM 20016) (Lactobacillus reuteri), this protein is Large ribosomal subunit protein uL5.